A 323-amino-acid polypeptide reads, in one-letter code: GTP 3',8-cyclase (323 aa).

In terms of domain architecture, Radical SAM core spans 5 to 228 (GFGRKVDYLR…TVLRDTSSPA (224 aa)). Arg-14 is a GTP binding site. Residues Cys-21 and Cys-25 each coordinate [4Fe-4S] cluster. Position 27 (Tyr-27) interacts with S-adenosyl-L-methionine. Cys-28 is a binding site for [4Fe-4S] cluster. Residue Arg-64 participates in GTP binding. Gly-68 is an S-adenosyl-L-methionine binding site. Residue Thr-95 participates in GTP binding. Residue Ser-119 participates in S-adenosyl-L-methionine binding. Position 155 (Lys-155) interacts with GTP. Residue Met-189 participates in S-adenosyl-L-methionine binding. [4Fe-4S] cluster-binding residues include Cys-250 and Cys-253. 255 to 257 (RIR) contacts GTP. Cys-267 is a binding site for [4Fe-4S] cluster. Residues 302 to 313 (KNKWSQKDDNEV) show a composition bias toward basic and acidic residues. The disordered stretch occupies residues 302 to 323 (KNKWSQKDDNEVSTRAFYQTGG).

The protein belongs to the radical SAM superfamily. MoaA family. Monomer and homodimer. [4Fe-4S] cluster is required as a cofactor.

The catalysed reaction is GTP + AH2 + S-adenosyl-L-methionine = (8S)-3',8-cyclo-7,8-dihydroguanosine 5'-triphosphate + 5'-deoxyadenosine + L-methionine + A + H(+). The protein operates within cofactor biosynthesis; molybdopterin biosynthesis. Catalyzes the cyclization of GTP to (8S)-3',8-cyclo-7,8-dihydroguanosine 5'-triphosphate. The chain is GTP 3',8-cyclase from Aliarcobacter butzleri (strain RM4018) (Arcobacter butzleri).